The following is a 295-amino-acid chain: 4-diphosphocytidyl-2-C-methyl-D-erythritol kinase (295 aa).

Lys-15 is a catalytic residue. Residue 101–111 (PIAAGLGGGSS) coordinates ATP. Residue Asp-143 is part of the active site.

Belongs to the GHMP kinase family. IspE subfamily.

It carries out the reaction 4-CDP-2-C-methyl-D-erythritol + ATP = 4-CDP-2-C-methyl-D-erythritol 2-phosphate + ADP + H(+). Its pathway is isoprenoid biosynthesis; isopentenyl diphosphate biosynthesis via DXP pathway; isopentenyl diphosphate from 1-deoxy-D-xylulose 5-phosphate: step 3/6. Its function is as follows. Catalyzes the phosphorylation of the position 2 hydroxy group of 4-diphosphocytidyl-2C-methyl-D-erythritol. The protein is 4-diphosphocytidyl-2-C-methyl-D-erythritol kinase of Caulobacter vibrioides (strain ATCC 19089 / CIP 103742 / CB 15) (Caulobacter crescentus).